The following is a 432-amino-acid chain: GTPase Obg (432 aa).

Positions 1 to 158 (MFVDQIKIEV…RKLKLELKVL (158 aa)) constitute an Obg domain. In terms of domain architecture, OBG-type G spans 159 to 335 (ADVGLVGFPS…LTHRTADVLE (177 aa)). Residues 165–172 (GFPSVGKS), 190–194 (FTTLV), 212–215 (DLPG), 282–285 (SKMD), and 316–318 (SSL) each bind GTP. Mg(2+)-binding residues include Ser172 and Thr192. The OCT domain occupies 354–432 (TFKEDEPAFK…IEDFTFEFVE (79 aa)).

Belongs to the TRAFAC class OBG-HflX-like GTPase superfamily. OBG GTPase family. As to quaternary structure, monomer. Mg(2+) is required as a cofactor.

The protein localises to the cytoplasm. Functionally, an essential GTPase which binds GTP, GDP and possibly (p)ppGpp with moderate affinity, with high nucleotide exchange rates and a fairly low GTP hydrolysis rate. Plays a role in control of the cell cycle, stress response, ribosome biogenesis and in those bacteria that undergo differentiation, in morphogenesis control. The polypeptide is GTPase Obg (Ligilactobacillus salivarius (strain UCC118) (Lactobacillus salivarius)).